A 629-amino-acid polypeptide reads, in one-letter code: ATP-dependent DNA helicase II subunit 2 (629 aa).

Residues 254 to 476 (SGLNRKTAVE…GHQIDELMEQ (223 aa)) enclose the Ku domain. Over residues 608 to 620 (DLETLLKRGEQHS) the composition is skewed to basic and acidic residues. The disordered stretch occupies residues 608-629 (DLETLLKRGEQHSRGSPNNSNN).

The protein belongs to the ku80 family. In terms of assembly, heterodimer of YKU70/HDF1 and YKU80/HDF2. Interacts with SIR4.

The protein localises to the nucleus. The protein resides in the chromosome. It is found in the telomere. The enzyme catalyses ATP + H2O = ADP + phosphate + H(+). Functionally, single-stranded DNA-dependent ATP-dependent helicase. Involved in non-homologous end joining (NHEJ) DNA double strand break repair. DNA-binding is sequence-independent but has a high affinity to nicks in double-stranded DNA and to the ends of duplex DNA. Binds to naturally occurring chromosomal ends, and therefore provides chromosomal end protection. Appears to have a role in recruitment of telomerase and CDC13 to the telomere and the subsequent telomere elongation. Required also for telomere recombination to repair telomeric ends in the absence of telomerase. KU70, of the KU70/KU80 heterodimer, binds to the stem loop of TLC1, the RNA component of telomerase. Involved in telomere maintenance. Interacts with telomeric repeats and subtelomeric sequences thereby controlling telomere length and protecting against subtelomeric rearrangement. Maintains telomeric chromatin, which is involved in silencing the expression of genes located at the telomere. Required for mating-type switching. This Saccharomyces cerevisiae (strain ATCC 204508 / S288c) (Baker's yeast) protein is ATP-dependent DNA helicase II subunit 2 (YKU80).